The chain runs to 29 residues: Cytochrome b6-f complex subunit 8 (29 aa).

The helical transmembrane segment at Ile3 to Val23 threads the bilayer.

This sequence belongs to the PetN family. As to quaternary structure, the 4 large subunits of the cytochrome b6-f complex are cytochrome b6, subunit IV (17 kDa polypeptide, PetD), cytochrome f and the Rieske protein, while the 4 small subunits are PetG, PetL, PetM and PetN. The complex functions as a dimer.

The protein localises to the plastid membrane. Component of the cytochrome b6-f complex, which mediates electron transfer between photosystem II (PSII) and photosystem I (PSI), cyclic electron flow around PSI, and state transitions. In Cuscuta exaltata (Tall dodder), this protein is Cytochrome b6-f complex subunit 8.